A 262-amino-acid polypeptide reads, in one-letter code: Adenosylcobinamide-GDP ribazoletransferase (262 aa).

A run of 6 helical transmembrane segments spans residues 43–63 (YFGL…WLTQ), 66–86 (LPAG…TGGF), 120–140 (GALA…ELAL), 146–166 (AGSA…SLIF), 191–211 (LFIL…IAAL), and 242–262 (AAQQ…GGIL).

Belongs to the CobS family. The cofactor is Mg(2+).

The protein localises to the cell inner membrane. It catalyses the reaction alpha-ribazole + adenosylcob(III)inamide-GDP = adenosylcob(III)alamin + GMP + H(+). The enzyme catalyses alpha-ribazole 5'-phosphate + adenosylcob(III)inamide-GDP = adenosylcob(III)alamin 5'-phosphate + GMP + H(+). The protein operates within cofactor biosynthesis; adenosylcobalamin biosynthesis; adenosylcobalamin from cob(II)yrinate a,c-diamide: step 7/7. Joins adenosylcobinamide-GDP and alpha-ribazole to generate adenosylcobalamin (Ado-cobalamin). Also synthesizes adenosylcobalamin 5'-phosphate from adenosylcobinamide-GDP and alpha-ribazole 5'-phosphate. The polypeptide is Adenosylcobinamide-GDP ribazoletransferase (Shewanella oneidensis (strain ATCC 700550 / JCM 31522 / CIP 106686 / LMG 19005 / NCIMB 14063 / MR-1)).